The primary structure comprises 328 residues: Ribosomal RNA large subunit methyltransferase F (328 aa).

Residues 1–31 form a disordered region; the sequence is MTDTRKPPRKKPQRPAKPAAPREKATLHPRN.

It belongs to the methyltransferase superfamily. METTL16/RlmF family.

It localises to the cytoplasm. The catalysed reaction is adenosine(1618) in 23S rRNA + S-adenosyl-L-methionine = N(6)-methyladenosine(1618) in 23S rRNA + S-adenosyl-L-homocysteine + H(+). Functionally, specifically methylates the adenine in position 1618 of 23S rRNA. This is Ribosomal RNA large subunit methyltransferase F from Pseudomonas syringae pv. syringae (strain B728a).